The primary structure comprises 620 residues: Chaperone protein HscA homolog (620 aa).

It belongs to the heat shock protein 70 family.

Chaperone involved in the maturation of iron-sulfur cluster-containing proteins. Has a low intrinsic ATPase activity which is markedly stimulated by HscB. The polypeptide is Chaperone protein HscA homolog (Bordetella pertussis (strain Tohama I / ATCC BAA-589 / NCTC 13251)).